The sequence spans 323 residues: Peroxisomal targeting signal 2 receptor (323 aa).

WD repeat units follow at residues 65–96 (DWND…QLWD), 109–141 (EHAQ…KLWD), 153–184 (GHES…RIWD), 196–227 (AHQA…RGWD), 240–271 (GHTY…RFWN), and 284–315 (HHTE…KIYD).

This sequence belongs to the WD repeat peroxin-7 family. In terms of assembly, interacts with PEX5; interaction only takes place when PEX7 is associated with cargo proteins. Interacts with VWA8. As to expression, ubiquitous. Highest expression in pancreas, skeletal muscle and heart.

It is found in the cytoplasm. It localises to the cytosol. Its subcellular location is the peroxisome matrix. In terms of biological role, receptor required for the peroxisomal import of proteins containing a C-terminal PTS2-type peroxisomal targeting signal. Specifically binds to cargo proteins containing a PTS2 peroxisomal targeting signal in the cytosol. Cargo protein-binding triggers interaction with PEX5 and formation of a ternary complex composed of PEX5 and PEX7 along with PTS2-containing cargo proteins, which is tranlocated into peroxisomes by passing through the PEX13-PEX14 docking complex. The chain is Peroxisomal targeting signal 2 receptor from Homo sapiens (Human).